The following is a 214-amino-acid chain: Putative archaetidylserine decarboxylase proenzyme (214 aa).

The active-site Schiff-base intermediate with substrate; via pyruvic acid is serine 180. Serine 180 is modified (pyruvic acid (Ser); by autocatalysis).

The protein belongs to the phosphatidylserine decarboxylase family. PSD-A subfamily. Heterodimer of a large membrane-associated beta subunit and a small pyruvoyl-containing alpha subunit. Pyruvate is required as a cofactor. Is synthesized initially as an inactive proenzyme. Formation of the active enzyme involves a self-maturation process in which the active site pyruvoyl group is generated from an internal serine residue via an autocatalytic post-translational modification. Two non-identical subunits are generated from the proenzyme in this reaction, and the pyruvate is formed at the N-terminus of the alpha chain, which is derived from the carboxyl end of the proenzyme. The post-translation cleavage follows an unusual pathway, termed non-hydrolytic serinolysis, in which the side chain hydroxyl group of the serine supplies its oxygen atom to form the C-terminus of the beta chain, while the remainder of the serine residue undergoes an oxidative deamination to produce ammonia and the pyruvoyl prosthetic group on the alpha chain.

The protein resides in the cell membrane. It catalyses the reaction archaetidylserine + H(+) = archaetidylethanolamine + CO2. In terms of biological role, catalyzes the formation of archaetidylethanolamine (PtdEtn) from archaetidylserine (PtdSer). This Methanopyrus kandleri (strain AV19 / DSM 6324 / JCM 9639 / NBRC 100938) protein is Putative archaetidylserine decarboxylase proenzyme.